Consider the following 1484-residue polypeptide: Cystic fibrosis transmembrane conductance regulator (1484 aa).

Residues 1–77 are Cytoplasmic-facing; the sequence is MQRSPLEKAS…KLINALRRCF (77 aa). The helical transmembrane segment at 78 to 98 threads the bilayer; sequence FWRFMFYGIILYLGEVTKSVQ. The ABC transmembrane type-1 1 domain occupies 81 to 365; the sequence is FMFYGIILYL…WAVQTWYDSL (285 aa). The Extracellular portion of the chain corresponds to 99–122; that stretch reads PLLLGRIIASYDPDNKEERSIAIY. The helical transmembrane segment at 123 to 146 threads the bilayer; the sequence is LGIGLCLLFVMRTLLLHPAIFGLH. At 147 to 195 the chain is on the cytoplasmic side; it reads RIGMQMRIAMFSLIYKKTLKLSSRVLDKISIGQLVSLLSNNLNKFDEGL. The helical transmembrane segment at 196–216 threads the bilayer; that stretch reads ALAHFVWIAPLQVTLLMGLLW. Over 217–222 the chain is Extracellular; it reads DLLQAS. The chain crosses the membrane as a helical span at residues 223-243; that stretch reads AFCGLAFLIVLALFQAGLGRM. The Cytoplasmic segment spans residues 244 to 298; sequence MMKYRDQRAGKINERLVITSEMIENIQSVKAYCWEEAMEKMIESIRQTELKLTRK. A helical membrane pass occupies residues 299–319; it reads AAYVRYFNSSAFFFSGFFVVF. Residues 320-339 lie on the Extracellular side of the membrane; the sequence is LSVLPYALIKTIVLRKIFTT. The chain crosses the membrane as a helical span at residues 340–358; that stretch reads ISFCIVLRMAVTRQFPWAV. Over 359–860 the chain is Cytoplasmic; it reads QTWYDSLGAI…YLRYVTIHKS (502 aa). Residues Trp-401, Ser-434, 458–465, and Gln-493 each bind ATP; that span reads GSTGAGKT. The ABC transporter 1 domain maps to 423–646; that stretch reads NADNSLFFSN…RPDFSSKLMG (224 aa). A lipid anchor (S-palmitoyl cysteine) is attached at Cys-524. A phosphoserine mark is found at Ser-549 and Ser-660. Residues 654 to 833 form a disordered R region region; that stretch reads SAERRNSIIT…EEINEEDLKE (180 aa). Residue Ser-670 is modified to Phosphoserine; by PKA. A Phosphoserine modification is found at Ser-686. Lys-688 is covalently cross-linked (Glycyl lysine isopeptide (Lys-Gly) (interchain with G-Cter in ubiquitin)). 2 positions are modified to phosphoserine: Ser-700 and Ser-712. Thr-717 carries the phosphothreonine modification. Phosphoserine is present on residues Ser-737, Ser-769, Ser-792, Ser-797, and Ser-815. A helical membrane pass occupies residues 861-881; the sequence is LVFVLIWCLVIFLAEVAISLV. An ABC transmembrane type-1 2 domain is found at 861 to 1157; it reads LVFVLIWCLV…AVNSSIDVDS (297 aa). Topologically, residues 882–920 are extracellular; it reads VLWLLKKTASQDKGNSTQSINSSYTVIFTSTSTYYVFYI. N-linked (GlcNAc...) asparagine glycosylation is found at Asn-896 and Asn-902. The discontinuously helical transmembrane segment at 921 to 941 threads the bilayer; sequence YVGVADTLLALGFFRGLPLVH. Residues 942–992 are Cytoplasmic-facing; the sequence is TLITVSKILHHKMLHAVLQAPMSTLNALKAGGILNRFSKDIAILDDLLPLT. The helical transmembrane segment at 993 to 1013 threads the bilayer; the sequence is IFDFVQLLLIVIGAVTVVSAL. The Extracellular segment spans residues 1014 to 1015; it reads QP. A helical membrane pass occupies residues 1016–1036; that stretch reads YIFLATVPVIAAFIMLRAYFL. Over 1037–1097 the chain is Cytoplasmic; the sequence is HTSQQLKQLE…TANWFLYLST (61 aa). Residues 1098 to 1118 form a helical membrane-spanning segment; the sequence is LRWFQMRMEIIFVIFFIAITF. The Extracellular segment spans residues 1119-1132; sequence ISILTTGEGVGAVG. A helical transmembrane segment spans residues 1133-1153; that stretch reads IILTLAMNIMGTLQWAVNSSI. The Cytoplasmic segment spans residues 1154–1484; sequence DVDSLMRSVS…TEEEVQETRL (331 aa). An ABC transporter 2 domain is found at 1214-1447; sequence MTVKDLTAKY…KSLFRQAISP (234 aa). ATP is bound by residues Tyr-1223 and 1248 to 1255; that span reads GRTGSGKS. The interval 1390–1484 is interaction with GORASP2; sequence RTLKQAFADC…TEEEVQETRL (95 aa). The S-palmitoyl cysteine moiety is linked to residue Cys-1399. 2 positions are modified to phosphoserine: Ser-1448 and Ser-1460. Positions 1456 to 1465 are enriched in basic residues; that stretch reads HRNSSKHKSR. The interval 1456–1484 is disordered; that stretch reads HRNSSKHKSRSQIAALKEETEEEVQETRL. The segment covering 1474–1484 has biased composition (acidic residues); the sequence is ETEEEVQETRL. The PDZ-binding motif lies at 1482–1484; that stretch reads TRL.

The protein belongs to the ABC transporter superfamily. ABCC family. CFTR transporter (TC 3.A.1.202) subfamily. In terms of assembly, monomer; does not require oligomerization for channel activity. May form oligomers in the membrane. Interacts with SLC26A3, SLC26A6 and NHERF1. Interacts with SHANK2. Interacts with MYO6. Interacts (via C-terminus) with GOPC (via PDZ domain); this promotes CFTR internalization and thereby decreases channel activity. Interacts with SLC4A7 through NHERF1. Found in a complex with MYO5B and RAB11A. Interacts with ANO1. Interacts with SLC26A8. Interacts with AHCYL1; the interaction increases CFTR activity. Interacts with CSE1L. The core-glycosylated form interacts with GORASP2 (via PDZ GRASP-type 1 domain) in respone to ER stress. Interacts with MARCHF2; the interaction leads to CFTR ubiqtuitination and degradation. Interacts with ADGRG2. In terms of processing, N-glycosylated. Post-translationally, phosphorylated; cAMP treatment promotes phosphorylation and activates the channel. Dephosphorylation decreases the ATPase activity (in vitro). Phosphorylation at PKA sites activates the channel. Phosphorylation at PKC sites enhances the response to phosphorylation by PKA. Phosphorylated by AMPK; this inhibits channel activity. Ubiquitinated, leading to its degradation in the lysosome. Deubiquitination by USP10 in early endosomes enhances its endocytic recycling to the cell membrane. Ubiquitinated by RNF185 during ER stress. Ubiquitinated by MARCHF2.

It localises to the apical cell membrane. It is found in the early endosome membrane. The protein resides in the cell membrane. The protein localises to the recycling endosome membrane. Its subcellular location is the endoplasmic reticulum membrane. It localises to the nucleus. The catalysed reaction is ATP + H2O + closed Cl(-) channel = ADP + phosphate + open Cl(-) channel.. It carries out the reaction chloride(in) = chloride(out). It catalyses the reaction hydrogencarbonate(in) = hydrogencarbonate(out). The enzyme catalyses ATP + H2O = ADP + phosphate + H(+). Its function is as follows. Epithelial ion channel that plays an important role in the regulation of epithelial ion and water transport and fluid homeostasis. Mediates the transport of chloride ions across the cell membrane. Possesses an intrinsic ATPase activity and utilizes ATP to gate its channel; the passive flow of anions through the channel is gated by cycles of ATP binding and hydrolysis by the ATP-binding domains. The ion channel is also permeable to HCO(3)(-); selectivity depends on the extracellular chloride concentration. Exerts its function also by modulating the activity of other ion channels and transporters. Contributes to the regulation of the pH and the ion content of the epithelial fluid layer. Modulates the activity of the epithelial sodium channel (ENaC) complex, in part by regulating the cell surface expression of the ENaC complex. May regulate bicarbonate secretion and salvage in epithelial cells by regulating the transporter SLC4A7. Can inhibit the chloride channel activity of ANO1. Plays a role in the chloride and bicarbonate homeostasis during sperm epididymal maturation and capacitation. In Mustela putorius furo (European domestic ferret), this protein is Cystic fibrosis transmembrane conductance regulator.